Here is a 526-residue protein sequence, read N- to C-terminus: Fumitremorgin C synthase (526 aa).

A helical transmembrane segment spans residues 4–24 (LPLSPAVLFLIIVLPILYLWI). Residue Cys443 coordinates heme.

This sequence belongs to the cytochrome P450 family. Requires heme as cofactor.

The protein localises to the membrane. The catalysed reaction is tryprostatin A + reduced [NADPH--hemoprotein reductase] + O2 = fumitremorgin C + oxidized [NADPH--hemoprotein reductase] + 2 H2O + H(+). Its pathway is mycotoxin biosynthesis. In terms of biological role, cytochrome P450 monooxygenase; part of the gene cluster that mediates the biosynthesis of fumitremorgins, indole alkaloids that carry not only intriguing chemical structures, but also interesting biological and pharmacological activities. The biosynthesis of fumitremorgin-type alkaloids begins by condensation of the two amino acids L-tryptophan and L-proline to brevianamide F, catalyzed by the non-ribosomal peptide synthetase ftmA. Brevianamide F is then prenylated by the prenyltransferase ftmPT1/ftmB in the presence of dimethylallyl diphosphate, resulting in the formation of tryprostatin B. The three cytochrome P450 monooxygenases, ftmP450-1/ftmC, ftmP450-2/ftmE and ftmP450-3/FtmG, are responsible for the conversion of tryprostatin B to 6-hydroxytryprostatin B, tryprostatin A to fumitremorgin C and fumitremorgin C to 12,13-dihydroxyfumitremorgin C, respectively. The putative methyltransferase ftmMT/ftmD is expected for the conversion of 6-hydroxytryprostatin B to tryprostatin A. FtmPT2/FtmH catalyzes the prenylation of 12,13-dihydroxyfumitre-morgin C in the presence of dimethylallyl diphosphate, resulting in the formation of fumitremorgin B. Fumitremorgin B is further converted to verruculogen by ftmOx1/ftmF via the insertion of an endoperoxide bond between the two prenyl moieties. In some fungal species, verruculogen is further converted to fumitremorgin A, but the enzymes involved in this step have not been identified yet. This is Fumitremorgin C synthase from Aspergillus fumigatus (Neosartorya fumigata).